The primary structure comprises 378 residues: Mating-type protein MAT-1 (378 aa).

A DNA-binding region (alpha box) is located at residues 60–117; the sequence is KAKKALNAFVGFRCYYIAIPAFKPWPMKKLSNLISLLWEGDPNKSLWSLMAKAWSNIR. Residues 235-256 form a disordered region; the sequence is SQVDQARVAARNRRRAKRQSAR. A compositionally biased stretch (basic residues) spans 244–253; sequence ARNRRRAKRQ.

It belongs to the MATALPHA1 family.

The protein localises to the nucleus. Its function is as follows. Mating type proteins are sequence specific DNA-binding proteins that act as master switches in fungal differentiation by controlling gene expression in a cell type-specific fashion. Transcriptional activator that induces the transcription of alpha-specific genes. This is Mating-type protein MAT-1 (MAT1) from Cochliobolus ellisii (Curvularia ellisii).